The chain runs to 968 residues: Translation initiation factor IF-2 (968 aa).

The segment covering 305–319 (KPAAAAGAPGAPGAA) has biased composition (low complexity). The disordered stretch occupies residues 305–376 (KPAAAAGAPG…NDRDARPEST (72 aa)). In terms of domain architecture, tr-type G spans 468-635 (PRAPVVTVMG…QVLLQAEVLE (168 aa)). The tract at residues 477–484 (GHVDHGKT) is G1. 477 to 484 (GHVDHGKT) provides a ligand contact to GTP. A G2 region spans residues 502-506 (GITQH). The segment at 523–526 (DTPG) is G3. Residues 523–527 (DTPGH) and 577–580 (NKID) contribute to the GTP site. Residues 577 to 580 (NKID) are G4. A G5 region spans residues 613-615 (SAR).

This sequence belongs to the TRAFAC class translation factor GTPase superfamily. Classic translation factor GTPase family. IF-2 subfamily.

The protein resides in the cytoplasm. Functionally, one of the essential components for the initiation of protein synthesis. Protects formylmethionyl-tRNA from spontaneous hydrolysis and promotes its binding to the 30S ribosomal subunits. Also involved in the hydrolysis of GTP during the formation of the 70S ribosomal complex. This Polaromonas sp. (strain JS666 / ATCC BAA-500) protein is Translation initiation factor IF-2.